The primary structure comprises 377 residues: Cytochrome b (377 aa).

The next 4 membrane-spanning stretches (helical) occupy residues 36-56 (WGSLLGIFLIIPIITGLFLAM), 80-102 (WLIRFIHVNGASFFFIFLYLHMA), 115-135 (VWLIGCTIYVVSMATAFMGYI), and 181-201 (FFVLHFILPFIILALSIIHLI). Heme b contacts are provided by H86 and H100. Heme b is bound by residues H185 and H199. H204 contributes to the a ubiquinone binding site. 4 consecutive transmembrane segments (helical) span residues 227–247 (YSSKDLMFLLLLMMIMMVIIF), 291–311 (LGGVLTMVFSILILFLLPFIS), 326–346 (LFWSFVVNMLILTWIGGMPVV), and 354–374 (LTSTFLYFIIILIYSNSFLMI).

The protein belongs to the cytochrome b family. The main subunits of complex b-c1 are: cytochrome b, cytochrome c1 and the Rieske protein. Requires heme b as cofactor.

The protein resides in the mitochondrion inner membrane. Component of the ubiquinol-cytochrome c reductase complex (complex III or cytochrome b-c1 complex) that is part of the mitochondrial respiratory chain. The b-c1 complex mediates electron transfer from ubiquinol to cytochrome c. Contributes to the generation of a proton gradient across the mitochondrial membrane that is then used for ATP synthesis. The protein is Cytochrome b (mt:Cyt-b) of Myzostoma seymourcollegiorum (Polychaete worm).